Consider the following 463-residue polypeptide: MAKNTKLWGGRFEGTVEDWVERFGASISFDQKLAKFDVIGSLAHVQMLGQTGILSLEESEKIQVGLKELLEELEAGQLDFDIANEDIHMNMEVLLTEKIGPLAGKLHTARSRNDQVATDMHLYLKEQLGYVLDKLAHLKGVLLDLAENHVATIMPGYTHLQHAQPISFAYHLMAYYNMFQRDSERFEFNQKHTDLCPLGAAALAGTTFPIDRQLSSDLLEFKQPYTNSLDAVSDRDFILEFLSNASILMMHMSRFCEEMINWCSFEYQFITLSDTFTIGSSIMPQKKNPDMAELIRGKTGRVYGHLFGLLTVMKSLPLAYNKDLQEDKEGMFDTVETILNSLDVLAGMLSSLQVNKEKMQESTEKDFSNATELADYLAGKGLPFREAHEVVGRLVLDSIKSAKNLQDWTLEELQTYHSLITEDIYVYLQPKTAVQRRNSLGGTGFDQVEYQIAVAKKANEAKK.

Belongs to the lyase 1 family. Argininosuccinate lyase subfamily.

The protein resides in the cytoplasm. The enzyme catalyses 2-(N(omega)-L-arginino)succinate = fumarate + L-arginine. Its pathway is amino-acid biosynthesis; L-arginine biosynthesis; L-arginine from L-ornithine and carbamoyl phosphate: step 3/3. The sequence is that of Argininosuccinate lyase from Streptococcus pneumoniae serotype 2 (strain D39 / NCTC 7466).